We begin with the raw amino-acid sequence, 393 residues long: Dual specificity mitogen-activated protein kinase kinase 1 (393 aa).

Residues 1–27 are disordered; the sequence is MPKKKPTPIQLNPAPDGSAVNGTSSAE. Residues 68–361 enclose the Protein kinase domain; sequence FEKISELGAG…LKQLMVHAFI (294 aa). Residues 74–82 and Lys-97 each bind ATP; that span reads LGAGNGGVV. Residue Asp-190 is the Proton acceptor of the active site. Residues Ser-218 and Ser-222 each carry the phosphoserine; by RAF modification. The interval 270–307 is RAF1-binding; it reads ELELLFGCHVEGDAAETPPRPRTPGRPLSSYGMDSRPP. Residue Thr-286 is modified to Phosphothreonine. Thr-292 carries the phosphothreonine; by MAPK1 modification. Position 298 is a phosphoserine; by PAK (Ser-298).

The protein belongs to the protein kinase superfamily. STE Ser/Thr protein kinase family. MAP kinase kinase subfamily. In terms of assembly, found in a complex with at least BRAF, HRAS, MAP2K1, MAPK3/ERK1 and RGS14. Forms a heterodimer with MAP2K2/MEK2. Forms heterodimers with KSR2 which further dimerize to form tetramers. Interacts with KSR1 or KSR2 and BRAF; the interaction with KSR1 or KSR2 mediates KSR1-BRAF or KSR2-BRAF dimerization. Interacts with ARBB2, LAMTOR3, MAPK1/ERK2 and RAF1. Interacts with MAPK1/ERK2. Interacts with MORG1. Interacts with PPARG. Interacts with SGK1. Interacts with BIRC6/bruce. Interacts with KAT7; the interaction promotes KAT7 phosphorylation. Interacts with RAF1 and NEK10; the interaction is required for ERK1/2-signaling pathway activation in response to UV irradiation. Interacts with TRAF3IP3. Interacts with MOS. Post-translationally, phosphorylation at Ser-218 and Ser-222 by MAP kinase kinase kinases (BRAF or MEKK1) positively regulates kinase activity. Also phosphorylated at Thr-292 by MAPK1/ERK2 and at Ser-298 by PAK. MAPK1/ERK2 phosphorylation of Thr-292 occurs in response to cellular adhesion and leads to inhibition of Ser-298 phosphorylation by PAK. Autophosphorylated at Ser-218 and Ser-222, autophosphosphorylation is promoted by NEK10 following UV irradiation.

It localises to the cytoplasm. The protein resides in the cytoskeleton. The protein localises to the microtubule organizing center. Its subcellular location is the centrosome. It is found in the spindle pole body. It localises to the nucleus. The protein resides in the membrane. It catalyses the reaction L-seryl-[protein] + ATP = O-phospho-L-seryl-[protein] + ADP + H(+). The enzyme catalyses L-threonyl-[protein] + ATP = O-phospho-L-threonyl-[protein] + ADP + H(+). The catalysed reaction is L-tyrosyl-[protein] + ATP = O-phospho-L-tyrosyl-[protein] + ADP + H(+). Ras proteins such as HRAS mediate the activation of RAF proteins such as RAF1 or BRAF which in turn activate extracellular signal-regulated kinases (ERK) through MAPK (mitogen-activated protein kinases) and ERK kinases MAP2K1/MEK1 and MAP2K2/MEK2. Activation occurs through phosphorylation of Ser-218 and Ser-222. MAP2K1/MEK1 binds KSR1 or KSR2 releasing the inhibitory intramolecular interaction between KSR1 or KSR2 protein kinase and N-terminal domains. This allows KSR1 or KSR2 dimerization with BRAF leading to BRAF activation and phosphorylation of MAP2K1. MAP2K1/MEK1 is also the target of negative feed-back regulation by its substrate kinases, such as MAPK1/ERK2. These phosphorylate MAP2K1/MEK1 on Thr-292, thereby facilitating dephosphorylation of the activating residues Ser-218 and Ser-222. Inhibited by serine/threonine phosphatase 2A. Functionally, dual specificity protein kinase which acts as an essential component of the MAP kinase signal transduction pathway. Binding of extracellular ligands such as growth factors, cytokines and hormones to their cell-surface receptors activates RAS and this initiates RAF1 activation. RAF1 then further activates the dual-specificity protein kinases MAP2K1/MEK1 and MAP2K2/MEK2. Both MAP2K1/MEK1 and MAP2K2/MEK2 function specifically in the MAPK/ERK cascade, and catalyze the concomitant phosphorylation of a threonine and a tyrosine residue in a Thr-Glu-Tyr sequence located in the extracellular signal-regulated kinases MAPK3/ERK1 and MAPK1/ERK2, leading to their activation and further transduction of the signal within the MAPK/ERK cascade. Activates BRAF in a KSR1 or KSR2-dependent manner; by binding to KSR1 or KSR2 releases the inhibitory intramolecular interaction between KSR1 or KSR2 protein kinase and N-terminal domains which promotes KSR1 or KSR2-BRAF dimerization and BRAF activation. Depending on the cellular context, this pathway mediates diverse biological functions such as cell growth, adhesion, survival and differentiation, predominantly through the regulation of transcription, metabolism and cytoskeletal rearrangements. One target of the MAPK/ERK cascade is peroxisome proliferator-activated receptor gamma (PPARG), a nuclear receptor that promotes differentiation and apoptosis. MAP2K1/MEK1 has been shown to export PPARG from the nucleus. The MAPK/ERK cascade is also involved in the regulation of endosomal dynamics, including lysosome processing and endosome cycling through the perinuclear recycling compartment (PNRC), as well as in the fragmentation of the Golgi apparatus during mitosis. The polypeptide is Dual specificity mitogen-activated protein kinase kinase 1 (Map2k1) (Mus musculus (Mouse)).